The following is a 406-amino-acid chain: Nicotinate phosphoribosyltransferase (406 aa).

Phosphohistidine; by autocatalysis is present on His-227.

The protein belongs to the NAPRTase family. Post-translationally, transiently phosphorylated on a His residue during the reaction cycle. Phosphorylation strongly increases the affinity for substrates and increases the rate of nicotinate D-ribonucleotide production. Dephosphorylation regenerates the low-affinity form of the enzyme, leading to product release.

The enzyme catalyses nicotinate + 5-phospho-alpha-D-ribose 1-diphosphate + ATP + H2O = nicotinate beta-D-ribonucleotide + ADP + phosphate + diphosphate. It functions in the pathway cofactor biosynthesis; NAD(+) biosynthesis; nicotinate D-ribonucleotide from nicotinate: step 1/1. Catalyzes the synthesis of beta-nicotinate D-ribonucleotide from nicotinate and 5-phospho-D-ribose 1-phosphate at the expense of ATP. This chain is Nicotinate phosphoribosyltransferase, found in Methanosarcina mazei (strain ATCC BAA-159 / DSM 3647 / Goe1 / Go1 / JCM 11833 / OCM 88) (Methanosarcina frisia).